The chain runs to 308 residues: Methionyl-tRNA formyltransferase (308 aa).

110-113 (SLLP) is a (6S)-5,6,7,8-tetrahydrofolate binding site.

It belongs to the Fmt family.

The enzyme catalyses L-methionyl-tRNA(fMet) + (6R)-10-formyltetrahydrofolate = N-formyl-L-methionyl-tRNA(fMet) + (6S)-5,6,7,8-tetrahydrofolate + H(+). In terms of biological role, attaches a formyl group to the free amino group of methionyl-tRNA(fMet). The formyl group appears to play a dual role in the initiator identity of N-formylmethionyl-tRNA by promoting its recognition by IF2 and preventing the misappropriation of this tRNA by the elongation apparatus. This chain is Methionyl-tRNA formyltransferase, found in Neisseria gonorrhoeae (strain NCCP11945).